The primary structure comprises 170 residues: Type II secretion system protein H (170 aa).

A propeptide spans methionine 1–glycine 5 (leader sequence). Phenylalanine 6 is modified (N-methylphenylalanine). Residues phenylalanine 6–phenylalanine 29 form a helical membrane-spanning segment.

This sequence belongs to the GSP H family. In terms of assembly, type II secretion is composed of four main components: the outer membrane complex, the inner membrane complex, the cytoplasmic secretion ATPase and the periplasm-spanning pseudopilus. Interacts with core component PulG. Post-translationally, cleaved by prepilin peptidase. Methylated by prepilin peptidase at the amino group of the N-terminal phenylalanine once the leader sequence is cleaved by prepilin peptidase.

The protein localises to the cell inner membrane. Component of the type II secretion system required for the energy-dependent secretion of extracellular factors such as proteases and toxins from the periplasm. Part of the pseudopilus tip complex that is critical for the recognition and binding of secretion substrates. The polypeptide is Type II secretion system protein H (pulH) (Klebsiella pneumoniae).